The chain runs to 367 residues: 4-hydroxy-3-methylbut-2-en-1-yl diphosphate synthase (flavodoxin) (367 aa).

4 residues coordinate [4Fe-4S] cluster: Cys270, Cys273, Cys305, and Glu312.

This sequence belongs to the IspG family. It depends on [4Fe-4S] cluster as a cofactor.

The catalysed reaction is (2E)-4-hydroxy-3-methylbut-2-enyl diphosphate + oxidized [flavodoxin] + H2O + 2 H(+) = 2-C-methyl-D-erythritol 2,4-cyclic diphosphate + reduced [flavodoxin]. It participates in isoprenoid biosynthesis; isopentenyl diphosphate biosynthesis via DXP pathway; isopentenyl diphosphate from 1-deoxy-D-xylulose 5-phosphate: step 5/6. Its function is as follows. Converts 2C-methyl-D-erythritol 2,4-cyclodiphosphate (ME-2,4cPP) into 1-hydroxy-2-methyl-2-(E)-butenyl 4-diphosphate. The protein is 4-hydroxy-3-methylbut-2-en-1-yl diphosphate synthase (flavodoxin) of Pasteurella multocida (strain Pm70).